We begin with the raw amino-acid sequence, 153 residues long: Ribosome maturation factor RimP (153 aa).

The protein belongs to the RimP family.

The protein localises to the cytoplasm. Its function is as follows. Required for maturation of 30S ribosomal subunits. The polypeptide is Ribosome maturation factor RimP (Acidithiobacillus ferrooxidans (strain ATCC 53993 / BNL-5-31) (Leptospirillum ferrooxidans (ATCC 53993))).